The primary structure comprises 254 residues: 3-deoxy-manno-octulosonate cytidylyltransferase (254 aa).

Belongs to the KdsB family.

The protein resides in the cytoplasm. The catalysed reaction is 3-deoxy-alpha-D-manno-oct-2-ulosonate + CTP = CMP-3-deoxy-beta-D-manno-octulosonate + diphosphate. It participates in nucleotide-sugar biosynthesis; CMP-3-deoxy-D-manno-octulosonate biosynthesis; CMP-3-deoxy-D-manno-octulosonate from 3-deoxy-D-manno-octulosonate and CTP: step 1/1. Its pathway is bacterial outer membrane biogenesis; lipopolysaccharide biosynthesis. Activates KDO (a required 8-carbon sugar) for incorporation into bacterial lipopolysaccharide in Gram-negative bacteria. The polypeptide is 3-deoxy-manno-octulosonate cytidylyltransferase (Pseudomonas putida (strain W619)).